The primary structure comprises 429 residues: Glucose-1-phosphate adenylyltransferase (429 aa).

Alpha-D-glucose 1-phosphate contacts are provided by residues Gly162, 177–178, and Ser209; that span reads EK.

This sequence belongs to the bacterial/plant glucose-1-phosphate adenylyltransferase family. In terms of assembly, homotetramer.

It carries out the reaction alpha-D-glucose 1-phosphate + ATP + H(+) = ADP-alpha-D-glucose + diphosphate. It participates in glycan biosynthesis; glycogen biosynthesis. Involved in the biosynthesis of ADP-glucose, a building block required for the elongation reactions to produce glycogen. Catalyzes the reaction between ATP and alpha-D-glucose 1-phosphate (G1P) to produce pyrophosphate and ADP-Glc. This is Glucose-1-phosphate adenylyltransferase from Picosynechococcus sp. (strain ATCC 27264 / PCC 7002 / PR-6) (Agmenellum quadruplicatum).